The primary structure comprises 358 residues: Magnesium-protoporphyrin IX monomethyl ester [oxidative] cyclase (358 aa).

Belongs to the AcsF family. Fe cation is required as a cofactor.

It carries out the reaction Mg-protoporphyrin IX 13-monomethyl ester + 3 NADPH + 3 O2 + 2 H(+) = 3,8-divinyl protochlorophyllide a + 3 NADP(+) + 5 H2O. Its pathway is porphyrin-containing compound metabolism; chlorophyll biosynthesis (light-independent). Catalyzes the formation of the isocyclic ring in chlorophyll biosynthesis. Mediates the cyclase reaction, which results in the formation of divinylprotochlorophyllide (Pchlide) characteristic of all chlorophylls from magnesium-protoporphyrin IX 13-monomethyl ester (MgPMME). In Synechococcus elongatus (strain ATCC 33912 / PCC 7942 / FACHB-805) (Anacystis nidulans R2), this protein is Magnesium-protoporphyrin IX monomethyl ester [oxidative] cyclase.